We begin with the raw amino-acid sequence, 338 residues long: MTTTLVSATIFDLSEVLCKGNKMLNYSTPSAGGCLLDRKAVGTPAGGGFPRRHSVTLPSSKFHQNQLLSSLKGEPAPSLSSRDSRFRDRSFSEGGERLLPTQKQPGSGQVNSSRYKTELCRPFEENGACKYGDKCQFAHGIHELRSLTRHPKYKTELCRTFHTIGFCPYGPRCHFIHNAEERRALAGGRDLSADRPRLQHSFSFAGFPSAAATAAATGLLDSPTSITPPPILSADDLLGSPTLPDGTNNPFAFSSQELASLFAPSMGLPGGGSPTTFLFRPMSESPHMFDSPPSPQDSLSDHEGYLSSSSSSHSGSDSPTLDNSRRLPIFSRLSISDD.

Residues methionine 1–asparagine 111 form a necessary and sufficient for the association with mRNA decay enzymes and mRNA decay activation region. The residue at position 54 (serine 54) is a Phosphoserine; by MAPKAPK2. The interval leucine 71–serine 113 is disordered. Residues arginine 82–glutamate 96 show a composition bias toward basic and acidic residues. Serine 90 carries the phosphoserine; by PKB/AKT1 modification. Phosphoserine; by PKB/AKT1 and MAPKAPK2 is present on serine 92. The span at threonine 101–serine 113 shows a compositional bias: polar residues. 2 consecutive C3H1-type zinc fingers follow at residues arginine 114–histidine 142 and lysine 152–glutamate 180. A necessary for mRNA decay activation region spans residues leucine 185–aspartate 338. Serine 203 carries the post-translational modification Phosphoserine; by PKB/AKT1 and MAPKAPK2. The disordered stretch occupies residues serine 273–aspartate 338. A compositionally biased stretch (low complexity) spans tyrosine 305–serine 318. Serine 318 bears the Phosphoserine mark. Serine 334 is modified (phosphoserine; by RPS6KA1).

As to quaternary structure, associates with the cytoplasmic CCR4-NOT deadenylase and RNA exosome complexes to trigger ARE-containing mRNA deadenylation and decay processes. Interacts with CNOT1. Interacts (via N-terminus) with CNOT6. Interacts with CNOT7; this interaction is inhibited in response to phorbol 12-myristate 13-acetate (PMA) treatment in a p38 MAPK-dependent manner. Interacts with DCP1A. Interacts (via N-terminus) with DCP2. Interacts (via N-terminus) with EXOSC2. Interacts with XRN1. Interacts (via phosphorylated form) with YWHAB; this interaction occurs in a protein kinase AKT1-dependent manner. Interacts (via phosphorylated form) with YWHAZ; this interaction occurs in a p38 MAPK- and AKT-signaling pathways. In terms of processing, phosphorylated. Phosphorylated by RPS6KA1 at Ser-334 upon phorbol 12-myristate 13-acetate (PMA) treatment; this phosphorylation results in dissociation of the CCR4-NOT deadenylase complex and induces p38 MAPK-mediated stabilization of the low-density lipoprotein receptor LDLR mRNA. Phosphorylated by protein kinase AKT1 at Ser-92 and Ser-203 in response to insulin; these phosphorylations stabilize ZFP36L1, increase the association with 14-3-3 proteins and mediate ARE-containing mRNA stabilization. AKT1-mediated phosphorylation at Ser-92 does not impair ARE-containing RNA-binding. Phosphorylated at Ser-54, Ser-92 and Ser-203 by MAPKAPK2; these phosphorylations increase the association with 14-3-3 proteins and mediate ARE-containing mRNA stabilization in a protein kinase AKT1-independent manner. MAPKAPK2-mediated phosphorylations at Ser-54, Ser-92 and Ser-203 do not impair ARE-containing RNA-binding. Phosphorylations increase the association with 14-3-3 proteins and mediate ARE-containing mRNA stabilization during early adipogenesis in a p38 MAPK- and AKT-dependent manner. Post-translationally, ubiquitinated. Ubiquitination leads to proteasomal degradation, a process inhibited by phosphorylations at Ser-90, Ser-92 and Ser-203. Expressed in preadipocytes and adipocytes. Expressed in the proximal and distal tubules in the renal cortex (at protein level). Expressed in ovary, heart, kidney, lung, spleen and thymus. Weakly expressed in brain, liver and testis. Expressed in osteoblasts. Expressed in embryonic stem cells (ESCs). Expressed through B lymphocyte development.

The protein localises to the nucleus. The protein resides in the cytoplasm. Its subcellular location is the cytoplasmic granule. It localises to the P-body. In terms of biological role, zinc-finger RNA-binding protein that destabilizes several cytoplasmic AU-rich element (ARE)-containing mRNA transcripts by promoting their poly(A) tail removal or deadenylation, and hence provide a mechanism for attenuating protein synthesis. Acts as a 3'-untranslated region (UTR) ARE mRNA-binding adapter protein to communicate signaling events to the mRNA decay machinery. Functions by recruiting the CCR4-NOT deadenylating complex and components of the cytoplasmic RNA decay machinery to the bound ARE-containing mRNAs, and hence promotes ARE-mediated mRNA deadenylation and decay processes. Also induces the degradation of ARE-containing mRNAs even in absence of poly(A) tail. Binds to 3'-UTR ARE of numerous mRNAs. Positively regulates early adipogenesis by promoting ARE-mediated mRNA decay of immediate early genes (IEGs). Promotes ARE-mediated mRNA decay of mineralocorticoid receptor NR3C2 mRNA in response to hypertonic stress. Negatively regulates hematopoietic/erythroid cell differentiation by promoting ARE-mediated mRNA decay of the transcription factor STAT5B mRNA. Positively regulates monocyte/macrophage cell differentiation by promoting ARE-mediated mRNA decay of the cyclin-dependent kinase CDK6 mRNA. Promotes degradation of ARE-containing pluripotency-associated mRNAs in embryonic stem cells (ESCs), such as NANOG, through a fibroblast growth factor (FGF)-induced MAPK-dependent signaling pathway, and hence attenuates ESC self-renewal and positively regulates mesendoderm differentiation. May play a role in mediating pro-apoptotic effects in malignant B-cells by promoting ARE-mediated mRNA decay of BCL2 mRNA. In association with ZFP36L2 maintains quiescence on developing B lymphocytes by promoting ARE-mediated decay of several mRNAs encoding cell cycle regulators that help B cells progress through the cell cycle, and hence ensuring accurate variable-diversity-joining (VDJ) recombination and functional immune cell formation. Together with ZFP36L2 is also necessary for thymocyte development and prevention of T-cell acute lymphoblastic leukemia (T-ALL) transformation by promoting ARE-mediated mRNA decay of the oncogenic transcription factor NOTCH1 mRNA. Involved in the delivery of target ARE-mRNAs to processing bodies (PBs). In addition to its cytosolic mRNA-decay function, plays a role in the regulation of nuclear mRNA 3'-end processing; modulates mRNA 3'-end maturation efficiency of the DLL4 mRNA through binding with an ARE embedded in a weak noncanonical polyadenylation (poly(A)) signal in endothelial cells. Also involved in the regulation of stress granule (SG) and P-body (PB) formation and fusion. Plays a role in vasculogenesis and endocardial development. Involved in the regulation of keratinocyte proliferation, differentiation and apoptosis. Plays a role in myoblast cell differentiation. The sequence is that of mRNA decay activator protein ZFP36L1 from Mus musculus (Mouse).